The primary structure comprises 212 residues: Large ribosomal subunit protein uL3 (212 aa).

Positions 130–155 are disordered; it reads KRGNMTHGSKNHRLPGSTGAGTTPGR.

Belongs to the universal ribosomal protein uL3 family. Part of the 50S ribosomal subunit. Forms a cluster with proteins L14 and L19.

Functionally, one of the primary rRNA binding proteins, it binds directly near the 3'-end of the 23S rRNA, where it nucleates assembly of the 50S subunit. The chain is Large ribosomal subunit protein uL3 from Rippkaea orientalis (strain PCC 8801 / RF-1) (Cyanothece sp. (strain PCC 8801)).